We begin with the raw amino-acid sequence, 128 residues long: Small ribosomal subunit protein bS6 (128 aa).

The protein belongs to the bacterial ribosomal protein bS6 family.

In terms of biological role, binds together with bS18 to 16S ribosomal RNA. This chain is Small ribosomal subunit protein bS6, found in Acinetobacter baylyi (strain ATCC 33305 / BD413 / ADP1).